The sequence spans 354 residues: Guanine nucleotide-binding protein G(i) subunit alpha-1 (354 aa).

Glycine 2 is lipidated: N-myristoyl glycine. A lipid anchor (S-palmitoyl cysteine) is attached at cysteine 3. The G-alpha domain occupies 32 to 354; it reads REVKLLLLGA…KNNLKDCGLF (323 aa). The tract at residues 35–48 is G1 motif; that stretch reads KLLLLGAGESGKST. Residues 43 to 48, 150 to 151, and 175 to 178 contribute to the GTP site; these read ESGKST, DS, and LRTR. Position 47 (serine 47) interacts with Mg(2+). The G2 motif stretch occupies residues 173-181; the sequence is DVLRTRVKT. A Mg(2+)-binding site is contributed by threonine 181. Residues 196 to 205 are G3 motif; it reads FKMFDVGGQR. GTP is bound by residues 200-204, 269-272, and alanine 326; these read DVGGQ and NKKD. Residues 265-272 are G4 motif; it reads ILFLNKKD. Residues 324-329 are G5 motif; it reads TCATDT.

This sequence belongs to the G-alpha family. G(i/o/t/z) subfamily. As to quaternary structure, heterotrimeric G proteins are composed of 3 units; alpha, beta and gamma. The alpha chain contains the guanine nucleotide binding site. Part of a spindle orientation complex at least composed of GNAI1, GPSM2 and NUMA1. Identified in complex with the beta subunit GNB1 and the gamma subunit GNG1. Identified in complex with the beta subunit GNB1 and the gamma subunit GNG2. Component of the TAS2R14-GNAI1 complex, consisting of TAS2R14, GNAI1, GNB1 and GNG2; within the complex interacts with TAS2R14; this complex plays a role in the perception of bitterness. GTP binding causes dissociation of the heterotrimer, liberating the individual subunits so that they can interact with downstream effector proteins. Interacts (GDP-bound form) with GPSM1; this inhibits guanine nucleotide exchange and GTP binding. Interacts (GDP-bound form) with GPSM2 (via GoLoco domains); this inhibits guanine nucleotide exchange. Interacts with RGS10; this strongly enhances GTP hydrolysis. Interacts with RGS1 and RGS16; this strongly enhances GTPase activity. Interacts with RGS4. Interacts with RGS12. Interacts (via active GTP- or inactive GDP-bound forms) with RGS14 (via RGS and GoLoco domains). Interacts with RGS3, RGS6, RGS7, RGS8, RGS17, RGS18 and RGS20 (in vitro). Interacts (GDP-bound form) with RIC8A (via C-terminus); promoting GNAI1 folding and association with the plasma membrane. Interacts (inactive GDP-bound form) with NUCB1 (via GBA motif); the interaction leads to activation of GNAI1. Interacts (inactive GDP-bound form) with CCDC88C/DAPLE (via GBA motif); the interaction leads to activation of GNAI1. Interacts (inactive GDP-bound form) with CCDC8A/GIV (via GBA motif). Myristoylation at Gly-2 is required for membrane anchoring before palmitoylation. In terms of processing, palmitoylation at Cys-3 varies with membrane lipid composition.

The protein localises to the nucleus. It localises to the cytoplasm. The protein resides in the cell membrane. Its subcellular location is the cytoskeleton. It is found in the microtubule organizing center. The protein localises to the centrosome. It localises to the cell cortex. The protein resides in the membrane. It catalyses the reaction GTP + H2O = GDP + phosphate + H(+). Functionally, guanine nucleotide-binding proteins (G proteins) function as transducers downstream of G protein-coupled receptors (GPCRs) in numerous signaling cascades. The alpha chain contains the guanine nucleotide binding site and alternates between an active, GTP-bound state and an inactive, GDP-bound state. Signaling by an activated GPCR promotes GDP release and GTP binding. The alpha subunit has a low GTPase activity that converts bound GTP to GDP, thereby terminating the signal. Both GDP release and GTP hydrolysis are modulated by numerous regulatory proteins. Signaling is mediated via effector proteins, such as adenylate cyclase. Inhibits adenylate cyclase activity of ADCY1, ADCY5 and ADCY6, leading to decreased intracellular cAMP levels. The inactive GDP-bound form prevents the association of RGS14 with centrosomes and is required for the translocation of RGS14 from the cytoplasm to the plasma membrane. Required for normal cytokinesis during mitosis. Required for cortical dynein-dynactin complex recruitment during metaphase. In Bos taurus (Bovine), this protein is Guanine nucleotide-binding protein G(i) subunit alpha-1 (GNAI1).